The chain runs to 326 residues: Glutamine synthetase (326 aa).

The 82-residue stretch at 4–85 folds into the GS beta-grasp domain; sequence FKLEYIWLDG…VMCEVMMPDG (82 aa). Residues 83 to 326 form the GS catalytic domain; sequence PDGHAHASNA…GDPYQIVRRF (244 aa). Mg(2+) is bound by residues Glu-107 and Glu-109. An ATP-binding site is contributed by Glu-164. Residues Glu-169 and Glu-176 each contribute to the Mg(2+) site. Residue Glu-275 participates in L-glutamate binding.

This sequence belongs to the glutamine synthetase family. Homooctamer and homotetramer. Mg(2+) is required as a cofactor.

The protein resides in the cytoplasm. It catalyses the reaction L-glutamate + NH4(+) + ATP = L-glutamine + ADP + phosphate + H(+). With respect to regulation, transferase activity is inhibited by NH(4)Cl. Its function is as follows. Catalyzes the ATP-dependent biosynthesis of glutamine from glutamate and ammonia. The sequence is that of Glutamine synthetase from Rhizobium leguminosarum bv. phaseoli.